A 246-amino-acid chain; its full sequence is Polyhedrin (246 aa).

This sequence belongs to the polyhedrin family.

Its function is as follows. Major component of the virus occlusion bodies, which are large proteinaceous structures (polyhedra), that protect the virus from the outside environment for extended periods until they are ingested by insect larvae. The polypeptide is Polyhedrin (PH) (Lepidoptera (butterflies and moths)).